Consider the following 186-residue polypeptide: Threonylcarbamoyl-AMP synthase (186 aa).

The 182-residue stretch at 5–186 (LLTIKAAAKL…WEAQTQKRLR (182 aa)) folds into the YrdC-like domain.

This sequence belongs to the SUA5 family. TsaC subfamily.

Its subcellular location is the cytoplasm. It carries out the reaction L-threonine + hydrogencarbonate + ATP = L-threonylcarbamoyladenylate + diphosphate + H2O. Its function is as follows. Required for the formation of a threonylcarbamoyl group on adenosine at position 37 (t(6)A37) in tRNAs that read codons beginning with adenine. Catalyzes the conversion of L-threonine, HCO(3)(-)/CO(2) and ATP to give threonylcarbamoyl-AMP (TC-AMP) as the acyladenylate intermediate, with the release of diphosphate. This Hydrogenovibrio crunogenus (strain DSM 25203 / XCL-2) (Thiomicrospira crunogena) protein is Threonylcarbamoyl-AMP synthase.